Reading from the N-terminus, the 328-residue chain is MPLHHLTRFPRLEFIGAPTPLEYLPRLSDYLGREIYIKRDDVTPIAMGGNKLRKLEFLVADALREGADTLITAGAIQSNHVRQTAAVAAKLGLHCVALLENPIGTTAENYLTNGNRLLLDLFNTQIEMCDALTDPDAQLQTLATRIEAQGFRPYVIPVGGSSALGAMGYVESALEIAQQCEEVVGLSSVVVASGSAGTHAGLAVGLEHLMPDVELIGVTVSRSVAEQKPKVIALQQAIAGQLALTATADIHLWDDYFAPGYGVPNDAGMEAVKLLASLEGVLLDPVYTGKAMAGLIDGISQKRFNDDGPILFIHTGGAPALFAYHPHV.

K51 is subject to N6-(pyridoxal phosphate)lysine.

It belongs to the ACC deaminase/D-cysteine desulfhydrase family. In terms of assembly, homodimer. The cofactor is pyridoxal 5'-phosphate.

The enzyme catalyses D-cysteine + H2O = hydrogen sulfide + pyruvate + NH4(+) + H(+). In terms of biological role, catalyzes the alpha,beta-elimination reaction of D-cysteine and of several D-cysteine derivatives. It could be a defense mechanism against D-cysteine. This chain is D-cysteine desulfhydrase, found in Salmonella typhimurium (strain LT2 / SGSC1412 / ATCC 700720).